Here is a 485-residue protein sequence, read N- to C-terminus: Zinc finger SWIM domain-containing protein 1 (485 aa).

The SWIM-type zinc finger occupies 363–405 (MNIQILEDTHKVQPQPPASCSCYFNQAFHLPCRHILAMLSARR).

This Homo sapiens (Human) protein is Zinc finger SWIM domain-containing protein 1 (ZSWIM1).